Consider the following 141-residue polypeptide: Nucleoside diphosphate kinase (141 aa).

ATP-binding residues include K11, F59, R87, T93, R104, and N114. H117 (pros-phosphohistidine intermediate) is an active-site residue.

This sequence belongs to the NDK family. In terms of assembly, homotetramer. Requires Mg(2+) as cofactor.

The protein localises to the cytoplasm. The enzyme catalyses a 2'-deoxyribonucleoside 5'-diphosphate + ATP = a 2'-deoxyribonucleoside 5'-triphosphate + ADP. The catalysed reaction is a ribonucleoside 5'-diphosphate + ATP = a ribonucleoside 5'-triphosphate + ADP. In terms of biological role, major role in the synthesis of nucleoside triphosphates other than ATP. The ATP gamma phosphate is transferred to the NDP beta phosphate via a ping-pong mechanism, using a phosphorylated active-site intermediate. The chain is Nucleoside diphosphate kinase from Stenotrophomonas maltophilia (strain R551-3).